We begin with the raw amino-acid sequence, 357 residues long: Nicotinate-nucleotide--dimethylbenzimidazole phosphoribosyltransferase (357 aa).

The active-site Proton acceptor is glutamate 323.

The protein belongs to the CobT family.

The catalysed reaction is 5,6-dimethylbenzimidazole + nicotinate beta-D-ribonucleotide = alpha-ribazole 5'-phosphate + nicotinate + H(+). It functions in the pathway nucleoside biosynthesis; alpha-ribazole biosynthesis; alpha-ribazole from 5,6-dimethylbenzimidazole: step 1/2. Its function is as follows. Catalyzes the synthesis of alpha-ribazole-5'-phosphate from nicotinate mononucleotide (NAMN) and 5,6-dimethylbenzimidazole (DMB). This is Nicotinate-nucleotide--dimethylbenzimidazole phosphoribosyltransferase from Nitratidesulfovibrio vulgaris (strain DP4) (Desulfovibrio vulgaris).